Reading from the N-terminus, the 182-residue chain is Transcription repressor OFP11 (182 aa).

The segment at 62 to 94 is disordered; sequence PLHRRHSSENPAGVFSTNRREEEEEDETTTSVS. Residues 104 to 169 enclose the OVATE domain; sequence MKHIESPDPY…VSAFADTLLW (66 aa).

As to expression, expressed in roots, rosette and cauline leaves, shoots, stems, flower buds and siliques.

The protein localises to the nucleus. Its function is as follows. Transcriptional repressor that may regulate multiple aspects of plant growth and development through the regulation of BEL1-LIKE (BLH) and KNOX TALE (KNAT) homeodomain transcription factors. This chain is Transcription repressor OFP11 (OFP11), found in Arabidopsis thaliana (Mouse-ear cress).